The following is a 304-amino-acid chain: Recombination-associated protein RdgC (304 aa).

The protein belongs to the RdgC family.

The protein resides in the cytoplasm. It is found in the nucleoid. May be involved in recombination. This chain is Recombination-associated protein RdgC, found in Shewanella baltica (strain OS185).